Reading from the N-terminus, the 370-residue chain is Putative F-box/kelch-repeat protein At3g46050 (370 aa).

The F-box domain occupies 15–61 (PTSFSSLPDDIVLNCLARVSRFHYPTLSLVCKGFRSLLDSRELHATR). Kelch repeat units follow at residues 119–165 (KIYI…VIND) and 167–212 (IYVI…VPGS).

This chain is Putative F-box/kelch-repeat protein At3g46050, found in Arabidopsis thaliana (Mouse-ear cress).